The chain runs to 192 residues: Transcription termination/antitermination protein NusG (192 aa).

One can recognise a KOW domain in the interval V140–L168.

The protein belongs to the NusG family.

Its function is as follows. Participates in transcription elongation, termination and antitermination. The sequence is that of Transcription termination/antitermination protein NusG from Rickettsia conorii (strain ATCC VR-613 / Malish 7).